Consider the following 262-residue polypeptide: Acyl-[acyl-carrier-protein]--UDP-N-acetylglucosamine O-acyltransferase (262 aa).

The protein belongs to the transferase hexapeptide repeat family. LpxA subfamily. In terms of assembly, homotrimer.

The protein resides in the cytoplasm. It carries out the reaction a (3R)-hydroxyacyl-[ACP] + UDP-N-acetyl-alpha-D-glucosamine = a UDP-3-O-[(3R)-3-hydroxyacyl]-N-acetyl-alpha-D-glucosamine + holo-[ACP]. The protein operates within glycolipid biosynthesis; lipid IV(A) biosynthesis; lipid IV(A) from (3R)-3-hydroxytetradecanoyl-[acyl-carrier-protein] and UDP-N-acetyl-alpha-D-glucosamine: step 1/6. In terms of biological role, involved in the biosynthesis of lipid A, a phosphorylated glycolipid that anchors the lipopolysaccharide to the outer membrane of the cell. This is Acyl-[acyl-carrier-protein]--UDP-N-acetylglucosamine O-acyltransferase from Shigella flexneri serotype 5b (strain 8401).